A 369-amino-acid polypeptide reads, in one-letter code: Leucine carboxyl methyltransferase 1 (369 aa).

S-adenosyl-L-methionine-binding positions include arginine 84, glycine 108, aspartate 132, 187–188, and glutamate 215; that span reads DL.

This sequence belongs to the methyltransferase superfamily. LCMT family.

It catalyses the reaction [phosphatase 2A protein]-C-terminal L-leucine + S-adenosyl-L-methionine = [phosphatase 2A protein]-C-terminal L-leucine methyl ester + S-adenosyl-L-homocysteine. Methylates the carboxyl group of the C-terminal leucine residue of protein phosphatase 2A catalytic subunits to form alpha-leucine ester residues. The polypeptide is Leucine carboxyl methyltransferase 1 (PPM1) (Debaryomyces hansenii (strain ATCC 36239 / CBS 767 / BCRC 21394 / JCM 1990 / NBRC 0083 / IGC 2968) (Yeast)).